The sequence spans 128 residues: Translation initiation factor 5A (128 aa).

Hypusine is present on Lys-35.

It belongs to the eIF-5A family.

The protein localises to the cytoplasm. Its function is as follows. Functions by promoting the formation of the first peptide bond. The protein is Translation initiation factor 5A of Methanosarcina barkeri (strain Fusaro / DSM 804).